We begin with the raw amino-acid sequence, 637 residues long: tRNA-dihydrouridine(47) synthase [NAD(P)(+)]-like (637 aa).

Disordered stretches follow at residues 1–21 (MAET…ACER), 41–63 (LDGD…EPGA), and 85–105 (ERQV…VKPA). Basic residues predominate over residues 89–104 (PKRARGQNKSRPHVKP). 2 C3H1-type zinc fingers span residues 107-137 (YDKD…HDVG) and 145-175 (ADLG…HLGP). Residue Thr260 is modified to Phosphothreonine. A phosphoserine mark is found at Ser263 and Ser264. FMN is bound by residues 298 to 300 (PLT) and Gln352. Cys383 acts as the Proton donor in catalysis. Residue Lys403 forms a Glycyl lysine isopeptide (Lys-Gly) (interchain with G-Cter in SUMO2) linkage. Residues Lys422, His452, 484–486 (NGD), and 507–508 (AR) contribute to the FMN site.

The protein belongs to the Dus family. Dus3 subfamily. Requires FMN as cofactor.

The enzyme catalyses 5,6-dihydrouridine(47) in tRNA + NAD(+) = uridine(47) in tRNA + NADH + H(+). It carries out the reaction 5,6-dihydrouridine(47) in tRNA + NADP(+) = uridine(47) in tRNA + NADPH + H(+). The catalysed reaction is a 5,6-dihydrouridine in mRNA + NAD(+) = a uridine in mRNA + NADH + H(+). It catalyses the reaction a 5,6-dihydrouridine in mRNA + NADP(+) = a uridine in mRNA + NADPH + H(+). Catalyzes the synthesis of dihydrouridine, a modified base, in various RNAs, such as tRNAs, mRNAs and some long non-coding RNAs (lncRNAs). Mainly modifies the uridine in position 47 (U47) in the D-loop of most cytoplasmic tRNAs. Also able to mediate the formation of dihydrouridine in some mRNAs, thereby regulating their translation. In Mus musculus (Mouse), this protein is tRNA-dihydrouridine(47) synthase [NAD(P)(+)]-like.